We begin with the raw amino-acid sequence, 108 residues long: Precursor of CEP16 (108 aa).

An N-terminal signal peptide occupies residues 1 to 27; it reads MVMAKNLTKFYVVFLVVLMMVVSLLLA. The propeptide occupies 28–92; the sequence is IEGRPVKDSS…VGHHRAKGYK (65 aa). Residues asparagine 50 and asparagine 98 are each glycosylated (N-linked (GlcNAc...) asparagine). Residues 76-108 form a disordered region; sequence QSGPSPGVGHHRAKGYKMFGRANDSGPSPGVGH. Hydroxyproline is present on residues proline 102 and proline 104.

It belongs to the C-terminally encoded plant signaling peptide (CEP) family. Interacts with CEP receptors (e.g. CEPR1 and CEPR2). Post-translationally, the mature small signaling peptide is generated by proteolytic processing of the longer precursor.

The protein localises to the secreted. Its subcellular location is the extracellular space. It is found in the apoplast. Its function is as follows. Extracellular signaling peptide that may regulate primary root growth rate and systemic nitrogen (N)-demand signaling. This chain is Precursor of CEP16, found in Arabidopsis thaliana (Mouse-ear cress).